The primary structure comprises 646 residues: Phosphomethylpyrimidine synthase (646 aa).

Substrate is bound by residues Asn235, Met264, Tyr293, His329, 349–351 (SRG), 390–393 (DGLR), and Glu429. His433 lines the Zn(2+) pocket. Substrate is bound at residue Tyr456. Zn(2+) is bound at residue His497. [4Fe-4S] cluster contacts are provided by Cys577, Cys580, and Cys585. A disordered region spans residues 624–646 (KSEEFRATGSELYHPAVHAEADE).

This sequence belongs to the ThiC family. As to quaternary structure, homodimer. Requires [4Fe-4S] cluster as cofactor.

It catalyses the reaction 5-amino-1-(5-phospho-beta-D-ribosyl)imidazole + S-adenosyl-L-methionine = 4-amino-2-methyl-5-(phosphooxymethyl)pyrimidine + CO + 5'-deoxyadenosine + formate + L-methionine + 3 H(+). The protein operates within cofactor biosynthesis; thiamine diphosphate biosynthesis. In terms of biological role, catalyzes the synthesis of the hydroxymethylpyrimidine phosphate (HMP-P) moiety of thiamine from aminoimidazole ribotide (AIR) in a radical S-adenosyl-L-methionine (SAM)-dependent reaction. The sequence is that of Phosphomethylpyrimidine synthase from Vibrio parahaemolyticus serotype O3:K6 (strain RIMD 2210633).